The sequence spans 246 residues: MLYLHDVWVNWFEGEENGYNVCHFYEWRKDDAIELLDQVPVLKVSAPLFHHLENSLAEIPKALLEDVYQKAYVRKNHERIQLDYCFIATDGYGIIAIDTIGYHIPIRKSRLIPRQEQLVYEMMKEQEVRTYPFQQSEKEYHILSPHPALMSGLTRKERQLKQLLFMALDQLYGTKNVAEVRYWYTEWAPEKYAYIQQMSFEEAWNGLYEEAKYGWSERHVHLCERLVKGQPFFEKLWEMEQEPKVN.

The protein belongs to the UPF0736 family.

In Anoxybacillus flavithermus (strain DSM 21510 / WK1), this protein is UPF0736 protein Aflv_2136.